A 285-amino-acid chain; its full sequence is Para-Rep C6 (285 aa).

In terms of domain architecture, CRESS-DNA virus Rep endonuclease spans 3–99 (TRQSTSWVFT…VAGPWEYGLF (97 aa)). An RCR-1 motif is present at residues 10-13 (VFTL). A divalent metal cation is bound by residues E36 and H42. The RCR-2 motif lies at 42–44 (HLQ). Residues 52–74 (RNTTLRQAKYIFNGLNPHLEIAR) carry the Nuclear localization signal motif. Y82 functions as the For DNA cleavage activity in the catalytic mechanism. Residues 82-85 (YAMK) carry the RCR-3 motif. D87 lines the a divalent metal cation pocket. A Nuclear localization signal motif is present at residues 99–105 (FIKRGSH). An ATP-binding site is contributed by 175–183 (GPAGNEGKS).

Belongs to the nanoviridea/circoviridae replication-associated protein family. In terms of assembly, homooligomer (Potential). Rep binds to repeated DNA motifs (iterons). Mg(2+) serves as cofactor. The cofactor is Mn(2+).

Its subcellular location is the host nucleus. The enzyme catalyses ATP + H2O = ADP + phosphate + H(+). Functionally, initiates and terminates the replication only of its own subviral DNA molecule. The closed circular ssDNA genome is first converted to a superhelical dsDNA. Rep binds a specific hairpin at the genome origin of replication. Introduces an endonucleolytic nick within the intergenic region of the genome, thereby initiating the rolling circle replication (RCR). Following cleavage, binds covalently to the 5'-phosphate of DNA as a tyrosyl ester. The cleavage gives rise to a free 3'-OH that serves as a primer for the cellular DNA polymerase. The polymerase synthesizes the (+) strand DNA by rolling circle mechanism. After one round of replication, a Rep-catalyzed nucleotidyl transfer reaction releases a circular single-stranded virus genome, thereby terminating the replication. Displays origin-specific DNA cleavage, nucleotidyl transferase, ATPase and helicase activities. This Subterranean clover stunt C6 alphasatellite (SCSC6A) protein is Para-Rep C6 (C6).